The chain runs to 399 residues: Mannan endo-1,4-beta-mannosidase 4 (399 aa).

The N-terminal stretch at 1-26 (MNNSIILIFVAILIIFPNEFSKPTRA) is a signal peptide. 2 residues coordinate substrate: Trp88 and Asn203. Glu204 (proton donor) is an active-site residue. Position 279 (Tyr279) interacts with substrate. Glu318 acts as the Nucleophile in catalysis. A disulfide bridge connects residues Cys347 and Cys354. Trp360 serves as a coordination point for substrate.

It belongs to the glycosyl hydrolase 5 (cellulase A) family. Expressed in flowers and fruit pericarp.

The protein resides in the secreted. The enzyme catalyses Random hydrolysis of (1-&gt;4)-beta-D-mannosidic linkages in mannans, galactomannans and glucomannans.. In terms of biological role, possesses endo-beta-mannanase and mannan transglycosylase activities. May be involved in cell wall degradation during fruit ripening. In Solanum lycopersicum (Tomato), this protein is Mannan endo-1,4-beta-mannosidase 4 (MAN4).